We begin with the raw amino-acid sequence, 797 residues long: Protocadherin beta-9 (797 aa).

The N-terminal stretch at 1 to 26 is a signal peptide; sequence MKTRGFSFPRQRQVLFLFLFWGVSLA. Residues 27–690 lie on the Extracellular side of the membrane; the sequence is GSGFGRYSVT…AQADLLTVYL (664 aa). Cadherin domains are found at residues 35–133, 138–242, 247–347, 352–451, and 456–561; these read VTEE…SPVF, MVLK…VPQF, YETQ…PPEL, LSNS…APAF, and YTLF…SPFV. An N-linked (GlcNAc...) asparagine glycan is attached at N169. N418 is a glycosylation site (N-linked (GlcNAc...) asparagine). A glycan (N-linked (GlcNAc...) asparagine) is linked at N567. In terms of domain architecture, Cadherin 6 spans 568-671; that stretch reads GSAPCTELVP…LVDGFSQPYL (104 aa). A helical membrane pass occupies residues 691–711; it reads VVALASVSSLFLLSVLLFVAV. Residues 712–797 lie on the Cytoplasmic side of the membrane; sequence RLCRRSRAAS…TLPNSFGFNY (86 aa). Residues 777–797 are disordered; it reads HRGGKEIEENSTLPNSFGFNY. A compositionally biased stretch (polar residues) spans 786-797; the sequence is NSTLPNSFGFNY.

The protein resides in the cell membrane. Functionally, potential calcium-dependent cell-adhesion protein. May be involved in the establishment and maintenance of specific neuronal connections in the brain. The chain is Protocadherin beta-9 (PCDHB9) from Homo sapiens (Human).